A 187-amino-acid chain; its full sequence is Ribosome-recycling factor (187 aa).

The protein belongs to the RRF family.

The protein localises to the cytoplasm. Its function is as follows. Responsible for the release of ribosomes from messenger RNA at the termination of protein biosynthesis. May increase the efficiency of translation by recycling ribosomes from one round of translation to another. This is Ribosome-recycling factor from Ligilactobacillus salivarius (strain UCC118) (Lactobacillus salivarius).